The following is a 402-amino-acid chain: MMKALVIEDIKVITTAPEGINLVAVKVTTNDPSIYGVGCATFTQRYEVVVTAIDKYLKPFLIGKDPQRIEDIWRTASVSSYWRNGPVLNNALSGIDMALWDIKGKLANMPLYQLFGGKVRDAVPAYIHADAQSVSDAVELVQTRVDQGWKQIRVQIGGYGGNNQAMHLPKDNTPGVYYDPDVYMKTMIEGFEKLREKFGDSIKLCHDVHERLSPSEAVKFANQLEKFDLLFLEDALPPEQVQWFEHLRSHTNIPLAMGELFNNPHEWTGLIQNRTIDYLRLHLSQVGGITPTRKIISLADAYGVRTAWHGPGDMTGIGHAVNTHLSITSTNFGIQEWSCSIKENTYKVFPGTPVAKDGYIYLNDQPGIGVDIDEEAAAAFPTHDRMADWTLCRLPDGSAGRP.

Aspartate 207 is a Mg(2+) binding site. D-arabinonate is bound at residue histidine 209. The Mg(2+) site is built by glutamate 233 and glutamate 259. Residues glutamate 259, arginine 280, histidine 309, and glutamate 336 each contribute to the D-arabinonate site.

The protein belongs to the mandelate racemase/muconate lactonizing enzyme family. GalD subfamily.

Has no detectable activity with D-mannonate and with a panel of 70 other acid sugars (in vitro), in spite of the conservation of the residues that are expected to be important for catalytic activity and cofactor binding. May have evolved a divergent function. The protein is D-galactonate dehydratase family member EGBG_02030 of Enterococcus gallinarum (strain EG2).